We begin with the raw amino-acid sequence, 224 residues long: Transmembrane protein C16orf54 (224 aa).

T4 carries O-linked (GalNAc...) threonine glycosylation. The chain crosses the membrane as a helical span at residues 32-52; the sequence is IPIMLVLATLAALFILTTAVL. Disordered regions lie at residues 104 to 138 and 152 to 203; these read TDRAPEPPTQVGTLEARATAPPAPSAPNSAPSNLG and WGPQ…GLQP. Residues T112 and T116 each carry the phosphothreonine modification. A Phosphoserine modification is found at S194.

In terms of processing, O-glycosylated with core 1 or possibly core 8 glycans.

It is found in the membrane. The polypeptide is Transmembrane protein C16orf54 (C16orf54) (Homo sapiens (Human)).